We begin with the raw amino-acid sequence, 362 residues long: Phosphoserine aminotransferase (362 aa).

R42 serves as a coordination point for L-glutamate. Residues 76–77 (AR), W102, T152, D172, and Q195 contribute to the pyridoxal 5'-phosphate site. N6-(pyridoxal phosphate)lysine is present on K196. 237-238 (NT) lines the pyridoxal 5'-phosphate pocket.

It belongs to the class-V pyridoxal-phosphate-dependent aminotransferase family. SerC subfamily. Homodimer. It depends on pyridoxal 5'-phosphate as a cofactor.

It is found in the cytoplasm. The catalysed reaction is O-phospho-L-serine + 2-oxoglutarate = 3-phosphooxypyruvate + L-glutamate. The enzyme catalyses 4-(phosphooxy)-L-threonine + 2-oxoglutarate = (R)-3-hydroxy-2-oxo-4-phosphooxybutanoate + L-glutamate. The protein operates within amino-acid biosynthesis; L-serine biosynthesis; L-serine from 3-phospho-D-glycerate: step 2/3. It functions in the pathway cofactor biosynthesis; pyridoxine 5'-phosphate biosynthesis; pyridoxine 5'-phosphate from D-erythrose 4-phosphate: step 3/5. In terms of biological role, catalyzes the reversible conversion of 3-phosphohydroxypyruvate to phosphoserine and of 3-hydroxy-2-oxo-4-phosphonooxybutanoate to phosphohydroxythreonine. This is Phosphoserine aminotransferase from Haemophilus influenzae (strain ATCC 51907 / DSM 11121 / KW20 / Rd).